The sequence spans 520 residues: 2-isopropylmalate synthase (520 aa).

The region spanning Val-4–Val-266 is the Pyruvate carboxyltransferase domain. Positions 13, 201, 203, and 237 each coordinate Mn(2+). The tract at residues His-390–Asn-520 is regulatory domain.

It belongs to the alpha-IPM synthase/homocitrate synthase family. LeuA type 1 subfamily. Homodimer. Requires Mn(2+) as cofactor.

It localises to the cytoplasm. It catalyses the reaction 3-methyl-2-oxobutanoate + acetyl-CoA + H2O = (2S)-2-isopropylmalate + CoA + H(+). Its pathway is amino-acid biosynthesis; L-leucine biosynthesis; L-leucine from 3-methyl-2-oxobutanoate: step 1/4. Functionally, catalyzes the condensation of the acetyl group of acetyl-CoA with 3-methyl-2-oxobutanoate (2-ketoisovalerate) to form 3-carboxy-3-hydroxy-4-methylpentanoate (2-isopropylmalate). The polypeptide is 2-isopropylmalate synthase (Streptococcus gallolyticus (strain UCN34)).